A 57-amino-acid polypeptide reads, in one-letter code: Large ribosomal subunit protein bL32 (57 aa).

Positions Met1–Asp20 are disordered. Residues Arg7 to Ser18 show a composition bias toward basic residues.

Belongs to the bacterial ribosomal protein bL32 family.

This chain is Large ribosomal subunit protein bL32 (rpmF), found in Mycoplasma genitalium (strain ATCC 33530 / DSM 19775 / NCTC 10195 / G37) (Mycoplasmoides genitalium).